The primary structure comprises 241 residues: 1-(5-phosphoribosyl)-5-[(5-phosphoribosylamino)methylideneamino] imidazole-4-carboxamide isomerase (241 aa).

The Proton acceptor role is filled by Asp-11. Asp-130 functions as the Proton donor in the catalytic mechanism.

The protein belongs to the HisA/HisF family.

Its subcellular location is the cytoplasm. The enzyme catalyses 1-(5-phospho-beta-D-ribosyl)-5-[(5-phospho-beta-D-ribosylamino)methylideneamino]imidazole-4-carboxamide = 5-[(5-phospho-1-deoxy-D-ribulos-1-ylimino)methylamino]-1-(5-phospho-beta-D-ribosyl)imidazole-4-carboxamide. It participates in amino-acid biosynthesis; L-histidine biosynthesis; L-histidine from 5-phospho-alpha-D-ribose 1-diphosphate: step 4/9. This Acidothermus cellulolyticus (strain ATCC 43068 / DSM 8971 / 11B) protein is 1-(5-phosphoribosyl)-5-[(5-phosphoribosylamino)methylideneamino] imidazole-4-carboxamide isomerase.